The sequence spans 254 residues: Adenosylcobinamide-GDP ribazoletransferase (254 aa).

The next 6 membrane-spanning stretches (helical) occupy residues 28-48 (FRQT…IVAL), 62-81 (IGVY…IDGI), 109-129 (VGVG…LGVL), 138-158 (VTFI…ALLV), 179-199 (LSLF…PYLG), and 200-220 (ASPT…IKQW).

The protein belongs to the CobS family. Mg(2+) serves as cofactor.

It is found in the cell membrane. It catalyses the reaction alpha-ribazole + adenosylcob(III)inamide-GDP = adenosylcob(III)alamin + GMP + H(+). The enzyme catalyses alpha-ribazole 5'-phosphate + adenosylcob(III)inamide-GDP = adenosylcob(III)alamin 5'-phosphate + GMP + H(+). It functions in the pathway cofactor biosynthesis; adenosylcobalamin biosynthesis; adenosylcobalamin from cob(II)yrinate a,c-diamide: step 7/7. Joins adenosylcobinamide-GDP and alpha-ribazole to generate adenosylcobalamin (Ado-cobalamin). Also synthesizes adenosylcobalamin 5'-phosphate from adenosylcobinamide-GDP and alpha-ribazole 5'-phosphate. The polypeptide is Adenosylcobinamide-GDP ribazoletransferase (Haloquadratum walsbyi (strain DSM 16790 / HBSQ001)).